The chain runs to 82 residues: Turripeptide Gsg9.1 (82 aa).

A signal peptide spans 1–23; sequence MMAKLMITVMTVFFLSLQQGADG. The propeptide occupies 24–46; the sequence is LFERWRKNQMAASRIMGNLITAR. 4-hydroxyproline is present on residues P49 and P50. Intrachain disulfides connect C53–C68, C58–C72, and C64–C79. 4-carboxyglutamate occurs at positions 60 and 63.

Belongs to the Pg turripeptide superfamily. Expressed by the venom duct.

It is found in the secreted. The polypeptide is Turripeptide Gsg9.1 (Gemmula sogodensis (Gem-turris)).